Consider the following 218-residue polypeptide: Protein-L-isoaspartate O-methyltransferase (218 aa).

The active site involves serine 52.

Belongs to the methyltransferase superfamily. L-isoaspartyl/D-aspartyl protein methyltransferase family.

The protein resides in the cytoplasm. It carries out the reaction [protein]-L-isoaspartate + S-adenosyl-L-methionine = [protein]-L-isoaspartate alpha-methyl ester + S-adenosyl-L-homocysteine. Its function is as follows. Catalyzes the methyl esterification of L-isoaspartyl residues in peptides and proteins that result from spontaneous decomposition of normal L-aspartyl and L-asparaginyl residues. It plays a role in the repair and/or degradation of damaged proteins. This chain is Protein-L-isoaspartate O-methyltransferase, found in Rhodopseudomonas palustris (strain ATCC BAA-98 / CGA009).